A 666-amino-acid chain; its full sequence is MTPTPDAPAAADADAATGAGWLARRRGALARVALAPVAQAIGRVERVADGIAFVSGLEDTMLNEVLRFEGGVTGFAHTLDEDLISVVLLDPDAGVRAQTAVARTGAVLEVPAGPQLLGRVVDPLGRPLDGGAPLDAAHTLPIERAAPAIIERDLVSEPLDTGVLIVDALFTIGRGQRELIIGDRATGKTSLAIDAIVNQRHSDVICVYVAIGQRASAVRRVIDAVRRYGAPERCVFVVAPAACAPGLQWIAPFAGFSIAEYFRDRGQHALVVVDDLTKHAATHRELALLTREPPGREAYPGDIFYVHARLLERAAKLSAALGGGSLSALPIAETDAGNLAAYIPTNLISITDGQIVLDSALFAANQRPAVDVGLSVSRVGGKAQHPALRAASGRLRLDYAQFLELEAFTRFGGLTDARLRAQITRGERIRALITQPRFRALRTLDEVVLLKALAAGALDAMSPDLVAPLRERLPAWLDARIAALTPALAPPRDWLADDAALDALAESVGELIERIAADAARRATAGMPAEDAAGDIGGAFGGEQARGDADRDADHGANREVSREVSPEASREVSREVSCEVSHEADRDAAADAARVAGRAPGRAEPDRAAPRAMPDGPPRAQADGDRASASRPRPDARGDAARTAPSPQGGADANVDAEAEARHKR.

182-189 (GDRATGKT) is an ATP binding site. The segment at 527 to 666 (MPAEDAAGDI…DAEAEARHKR (140 aa)) is disordered. A compositionally biased stretch (basic and acidic residues) spans 545–590 (ARGDADRDADHGANREVSREVSPEASREVSREVSCEVSHEADRDAA). Low complexity predominate over residues 591 to 601 (ADAARVAGRAP). Positions 623-641 (ADGDRASASRPRPDARGDA) are enriched in basic and acidic residues.

Belongs to the ATPase alpha/beta chains family. As to quaternary structure, F-type ATPases have 2 components, CF(1) - the catalytic core - and CF(0) - the membrane proton channel. CF(1) has five subunits: alpha(3), beta(3), gamma(1), delta(1), epsilon(1). CF(0) has three main subunits: a(1), b(2) and c(9-12). The alpha and beta chains form an alternating ring which encloses part of the gamma chain. CF(1) is attached to CF(0) by a central stalk formed by the gamma and epsilon chains, while a peripheral stalk is formed by the delta and b chains.

The protein localises to the cell inner membrane. The enzyme catalyses ATP + H2O + 4 H(+)(in) = ADP + phosphate + 5 H(+)(out). In terms of biological role, produces ATP from ADP in the presence of a proton gradient across the membrane. The alpha chain is a regulatory subunit. The protein is ATP synthase subunit alpha 2 of Burkholderia pseudomallei (strain 1106a).